The following is a 258-amino-acid chain: Ubiquinone/menaquinone biosynthesis C-methyltransferase UbiE (258 aa).

Residues threonine 81, aspartate 102, and 130–131 (NA) each bind S-adenosyl-L-methionine.

The protein belongs to the class I-like SAM-binding methyltransferase superfamily. MenG/UbiE family.

The catalysed reaction is a 2-demethylmenaquinol + S-adenosyl-L-methionine = a menaquinol + S-adenosyl-L-homocysteine + H(+). It carries out the reaction a 2-methoxy-6-(all-trans-polyprenyl)benzene-1,4-diol + S-adenosyl-L-methionine = a 5-methoxy-2-methyl-3-(all-trans-polyprenyl)benzene-1,4-diol + S-adenosyl-L-homocysteine + H(+). The protein operates within quinol/quinone metabolism; menaquinone biosynthesis; menaquinol from 1,4-dihydroxy-2-naphthoate: step 2/2. It functions in the pathway cofactor biosynthesis; ubiquinone biosynthesis. In terms of biological role, methyltransferase required for the conversion of demethylmenaquinol (DMKH2) to menaquinol (MKH2) and the conversion of 2-polyprenyl-6-methoxy-1,4-benzoquinol (DDMQH2) to 2-polyprenyl-3-methyl-6-methoxy-1,4-benzoquinol (DMQH2). This chain is Ubiquinone/menaquinone biosynthesis C-methyltransferase UbiE, found in Rhizobium rhizogenes (strain K84 / ATCC BAA-868) (Agrobacterium radiobacter).